Reading from the N-terminus, the 255-residue chain is Wtf element wtf15 (255 aa).

A disordered region spans residues Lys19–Ser78. Polar residues-rich tracts occupy residues Thr41–Glu60 and Glu67–Ser78. 3 helical membrane-spanning segments follow: residues Phe85–Pro105, Phe112–Ile132, and Phe162–Leu182.

The protein belongs to the WTF family.

It is found in the spore membrane. In terms of biological role, may act in meiotic drive. This Schizosaccharomyces kambucha (Fission yeast) protein is Wtf element wtf15.